Reading from the N-terminus, the 146-residue chain is Glycosylation-dependent cell adhesion molecule 1 (146 aa).

An N-terminal signal peptide occupies residues 1–19 (MKFFTVLLFASLAATSLAA). A disordered region spans residues 25–112 (DELHLRTQPT…SAATSEGKLT (88 aa)). The segment covering 48 to 60 (ISKESTSSKDLSK) has biased composition (basic and acidic residues). Residues Ser54, Ser59, and Ser71 each carry the phosphoserine modification. Polar residues predominate over residues 74 to 106 (NVGTESTKPQSQEAQDGLRSGSSQQEETTSAAT).

The protein belongs to the PP3/GlyCAM-1 family. Extensively O-glycosylated. As to expression, lymph nodes. Associated with the lumenal surface of the high endothelial venules of peripheral lymph nodes.

The protein localises to the cell membrane. Functionally, adhesion molecule that accomplishes cell binding by presenting carbohydrate(s) to the lectin domain of L-selectin. This is Glycosylation-dependent cell adhesion molecule 1 (Glycam1) from Rattus norvegicus (Rat).